The primary structure comprises 139 residues: NADPH-dependent 7-cyano-7-deazaguanine reductase (139 aa).

Cys-34 (thioimide intermediate) is an active-site residue. The active-site Proton donor is Asp-41. Substrate is bound by residues 56–58 and 75–76; these read IEL and HE.

The protein belongs to the GTP cyclohydrolase I family. QueF type 1 subfamily.

It is found in the cytoplasm. The catalysed reaction is 7-aminomethyl-7-carbaguanine + 2 NADP(+) = 7-cyano-7-deazaguanine + 2 NADPH + 3 H(+). It participates in tRNA modification; tRNA-queuosine biosynthesis. In terms of biological role, catalyzes the NADPH-dependent reduction of 7-cyano-7-deazaguanine (preQ0) to 7-aminomethyl-7-deazaguanine (preQ1). The chain is NADPH-dependent 7-cyano-7-deazaguanine reductase from Nitrosomonas eutropha (strain DSM 101675 / C91 / Nm57).